The primary structure comprises 325 residues: ADP-ribose glycohydrolase MACROD1 (325 aa).

An N6-succinyllysine mark is found at Lys96, Lys103, and Lys129. Lys138 is covalently cross-linked (Glycyl lysine isopeptide (Lys-Gly) (interchain with G-Cter in SUMO2)). A Macro domain is found at 141-322 (EPRYKKDKQL…IYRSRLPHYF (182 aa)). A substrate-binding site is contributed by 159–161 (SDI). An N6-acetyllysine modification is found at Lys163. Residues 172 to 174 (AAN), 179 to 184 (GGGGVD), 267 to 273 (ISTGVFG), and Phe306 contribute to the substrate site.

The protein belongs to the MacroD-type family. MacroD1/2-like subfamily. Interacts with ESR1; Interacts in a manner that is estrogen independent but is enhanced by estrogen. Interacts (via macro domain) with AR.

The protein localises to the nucleus. It carries out the reaction 3''-O-acetyl-ADP-D-ribose + H2O = ADP-D-ribose + acetate + H(+). The catalysed reaction is 2''-O-acetyl-ADP-D-ribose + H2O = ADP-D-ribose + acetate + H(+). The enzyme catalyses 4-O-(ADP-D-ribosyl)-L-aspartyl-[protein] + H2O = L-aspartyl-[protein] + ADP-D-ribose + H(+). It catalyses the reaction 5-O-(ADP-D-ribosyl)-L-glutamyl-[protein] + H2O = L-glutamyl-[protein] + ADP-D-ribose + H(+). It carries out the reaction alpha-NAD(+) + H2O = ADP-D-ribose + nicotinamide + H(+). Its activity is regulated as follows. Subject to competitive inhibition by the product ADP-ribose. Functionally, removes ADP-ribose from aspartate and glutamate residues in proteins bearing a single ADP-ribose moiety. Inactive towards proteins bearing poly-ADP-ribose. Deacetylates O-acetyl-ADP ribose, a signaling molecule generated by the deacetylation of acetylated lysine residues in histones and other proteins. Plays a role in estrogen signaling. Binds to androgen receptor (AR) and amplifies the transactivation function of AR in response to androgen. May play an important role in carcinogenesis and/or progression of hormone-dependent cancers by feed-forward mechanism that activates ESR1 transactivation. Could be an ESR1 coactivator, providing a positive feedback regulatory loop for ESR1 signal transduction. Could be involved in invasive growth by down-regulating CDH1 in endometrial cancer cells. Enhances ESR1-mediated transcription activity. The polypeptide is ADP-ribose glycohydrolase MACROD1 (Homo sapiens (Human)).